The following is a 159-amino-acid chain: Ribosomal RNA large subunit methyltransferase H (159 aa).

S-adenosyl-L-methionine contacts are provided by residues Leu-76, Gly-108, and 127 to 132; that span reads FSKMTF.

Belongs to the RNA methyltransferase RlmH family. Homodimer.

Its subcellular location is the cytoplasm. The catalysed reaction is pseudouridine(1915) in 23S rRNA + S-adenosyl-L-methionine = N(3)-methylpseudouridine(1915) in 23S rRNA + S-adenosyl-L-homocysteine + H(+). In terms of biological role, specifically methylates the pseudouridine at position 1915 (m3Psi1915) in 23S rRNA. This is Ribosomal RNA large subunit methyltransferase H from Lachnoclostridium phytofermentans (strain ATCC 700394 / DSM 18823 / ISDg) (Clostridium phytofermentans).